Reading from the N-terminus, the 443-residue chain is Maintenance of mitochondrial morphology protein 1 (443 aa).

The Lumenal segment spans residues 1 to 80 (MADLETSDLS…PSNTWSFTQG (80 aa)). A helical membrane pass occupies residues 81–101 (LIVGQLSVVFVIVIFIKFFVF). Over 102-443 (AESSPALAKS…NGDKVEDGSN (342 aa)) the chain is Cytoplasmic. Disordered stretches follow at residues 126–146 (KKDQSSSDDADPDDDSETTAS) and 304–358 (LSAH…NDGT). A compositionally biased stretch (acidic residues) spans 131-142 (SSDDADPDDDSE). Positions 165 to 417 (SPESLDWFNV…EPRFQVVRLP (253 aa)) constitute an SMP-LTD domain.

This sequence belongs to the MMM1 family. Homodimer. Component of the ER-mitochondria encounter structure (ERMES) or MDM complex, composed of MMM1, MDM10, MDM12 and MDM34. An MMM1 homodimer associates with one molecule of MDM12 on each side in a pairwise head-to-tail manner, and the SMP-LTD domains of MMM1 and MDM12 generate a continuous hydrophobic tunnel for phospholipid trafficking.

It localises to the endoplasmic reticulum membrane. Functionally, component of the ERMES/MDM complex, which serves as a molecular tether to connect the endoplasmic reticulum (ER) and mitochondria. Components of this complex are involved in the control of mitochondrial shape and protein biogenesis, and function in nonvesicular lipid trafficking between the ER and mitochondria. The MDM12-MMM1 subcomplex functions in the major beta-barrel assembly pathway that is responsible for biogenesis of all outer membrane beta-barrel proteins, and acts in a late step after the SAM complex. The MDM10-MDM12-MMM1 subcomplex further acts in the TOM40-specific pathway after the action of the MDM12-MMM1 complex. Essential for establishing and maintaining the structure of mitochondria and maintenance of mtDNA nucleoids. This is Maintenance of mitochondrial morphology protein 1 from Scheffersomyces stipitis (strain ATCC 58785 / CBS 6054 / NBRC 10063 / NRRL Y-11545) (Yeast).